The chain runs to 221 residues: MTGKKAVVILSGGLDSTTCMGVGKEAGYELYPISFHYGQRHDREIENAKKVASYFNVTEHKVFSLEFLKEIGGSSLTDQSMEVSQEGVGEDVPNTYVPGRNTIFLSIAASYAEAIGAEKIYVGVSAVDYSGYPDCRPEFIEAMQQTIYQGTNANPAMTIEAPLIDLSKGDTVKLGMKLNVPYHLTTSCYLGGEEACGECDSCRLRLQGFEEAGATDPIKYM.

10–20 serves as a coordination point for ATP; the sequence is LSGGLDSTTCM. Zn(2+)-binding residues include Cys188, Cys196, Cys199, and Cys202.

This sequence belongs to the QueC family. As to quaternary structure, homodimer. Zn(2+) is required as a cofactor.

It carries out the reaction 7-carboxy-7-deazaguanine + NH4(+) + ATP = 7-cyano-7-deazaguanine + ADP + phosphate + H2O + H(+). It participates in purine metabolism; 7-cyano-7-deazaguanine biosynthesis. Catalyzes the ATP-dependent conversion of 7-carboxy-7-deazaguanine (CDG) to 7-cyano-7-deazaguanine (preQ(0)). This Oceanobacillus iheyensis (strain DSM 14371 / CIP 107618 / JCM 11309 / KCTC 3954 / HTE831) protein is 7-cyano-7-deazaguanine synthase.